The primary structure comprises 596 residues: RNA-binding protein involved in heterochromatin assembly dri1 (596 aa).

Phosphoserine is present on serine 176. The 79-residue stretch at 236–314 (KIVHVAGLTN…RMLEIIPSST (79 aa)) folds into the RRM domain. The RanBP2-type 1 zinc finger occupies 335-364 (RPGDWNCPMCGFSNFQRRTSCFRCSFPGPT). The residue at position 429 (serine 429) is a Phosphoserine. 2 consecutive RanBP2-type zinc fingers follow at residues 437 to 468 (RAGDWKCGSEGCGYHNFAKNVCCLRCGASRAT) and 552 to 580 (DQGDWLCECGFTNFRRRSNCLRCNAPHYS).

As to quaternary structure, interacts with dpb4. Interacts with chp1.

The protein localises to the chromosome. It localises to the nucleus. Its subcellular location is the cytoplasm. It is found in the cytoplasmic granule. Functionally, mediates heterochromatin assembly by promoting RNAi-mediated heterochromatin silencing and histone deacetylation. Binds pericetromeric transcripts and recruits the RNA-induced transcriptional silencing (RITS) complex to heterochromatin. Recruits sir2 to chromatin to promote deacetylation of 'Lys-9' of histone H3. Involved in bipolar spindle assembly during mitosis. Required for proper localization of kinesin-14/Klp2 on the spindle microtubules. The chain is RNA-binding protein involved in heterochromatin assembly dri1 from Schizosaccharomyces pombe (strain 972 / ATCC 24843) (Fission yeast).